The sequence spans 871 residues: Envelope glycoprotein gp160 (871 aa).

An N-terminal signal peptide occupies residues 1–21 (MKNLIGITLILIITILGIGFS). Over 22-684 (TYYTTVFYGV…DITQWLWYIK (663 aa)) the chain is Extracellular. Cysteines 43 and 63 form a disulfide. Asn77, Asn124, Asn127, Asn142, Asn153, Asn157, Asn185, Asn194, Asn229, Asn238, Asn259, Asn273, Asn285, Asn289, Asn297, Asn329, Asn345, Asn352, Asn384, Asn387, Asn395, Asn398, Asn438, Asn451, and Asn496 each carry an N-linked (GlcNAc...) asparagine; by host glycan. Intrachain disulfides connect Cys108–Cys202, Cys115–Cys193, Cys120–Cys154, Cys215–Cys244, and Cys225–Cys236. The V1 stretch occupies residues 120 to 153 (CTMTNTTNKTLNSATTTLTPTVNLSSIPNYEVYN). Positions 154–193 (CSFNQTTEFRDKKKQIYSLFYREDIVKEDGNNNSYYLHNC) are V2. A V3 region spans residues 292–325 (CERTGNNTRGQVQIGPGMTFYNIENVVGDTRKAY). Residues Cys292 and Cys326 are joined by a disulfide bond. 2 cysteine pairs are disulfide-bonded: Cys376–Cys435 and Cys383–Cys408. Positions 383-408 (CNLTNWTNTWTANRTNNTHGTLVAPC) are V4. Positions 451-458 (NNSYTPQF) are V5. The fusion peptide stretch occupies residues 502–522 (RDVGIGLLFLGFLSAAGSTMG). The interval 567 to 583 (LQARMLAVEKYIRDQQL) is immunosuppression. N-linked (GlcNAc...) asparagine; by host glycans are attached at residues Asn602, Asn613, Asn626, and Asn638. Residues 645 to 668 (SLLEKAQTQQEKNKQELLELDKWS) are a coiled coil. The tract at residues 663–684 (ELDKWSSLWDWFDITQWLWYIK) is MPER; binding to GalCer. A helical transmembrane segment spans residues 685-705 (IAIIIVAGLVGLRILMFIVNV). The Cytoplasmic portion of the chain corresponds to 706 to 871 (VKQVRQGYTP…IRQGLELALN (166 aa)). Residues 713 to 716 (YTPL) carry the YXXL motif; contains endocytosis signal motif.

As to quaternary structure, the mature envelope protein (Env) consists of a homotrimer of non-covalently associated gp120-gp41 heterodimers. The resulting complex protrudes from the virus surface as a spike. Interacts with host CD4 and CCR5. Gp120 also interacts with the C-type lectins CD209/DC-SIGN and CLEC4M/DC-SIGNR (collectively referred to as DC-SIGN(R)). The mature envelope protein (Env) consists of a homotrimer of non-covalently associated gp120-gp41 heterodimers. The resulting complex protrudes from the virus surface as a spike. Specific enzymatic cleavages in vivo yield mature proteins. Envelope glycoproteins are synthesized as an inactive precursor that is heavily N-glycosylated and processed likely by host cell furin in the Golgi to yield the mature SU and TM proteins. The cleavage site between SU and TM requires the minimal sequence [KR]-X-[KR]-R.

Its subcellular location is the virion membrane. The protein resides in the host cell membrane. It is found in the host endosome membrane. Its function is as follows. The surface protein gp120 (SU) attaches the virus to the host lymphoid cell by binding to the primary receptor CD4. This interaction induces a structural rearrangement creating a high affinity binding site for a chemokine coreceptor like CCR5. This peculiar 2 stage receptor-interaction strategy allows gp120 to maintain the highly conserved coreceptor-binding site in a cryptic conformation, protected from neutralizing antibodies. These changes are transmitted to the transmembrane protein gp41 and are thought to activate its fusogenic potential by unmasking its fusion peptide. In terms of biological role, surface protein gp120 (SU) may target the virus to gut-associated lymphoid tissue (GALT) by binding host ITGA4/ITGB7 (alpha-4/beta-7 integrins), a complex that mediates T-cell migration to the GALT. Interaction between gp120 and ITGA4/ITGB7 would allow the virus to enter GALT early in the infection, infecting and killing most of GALT's resting CD4+ T-cells. This T-cell depletion is believed to be the major insult to the host immune system leading to AIDS. Functionally, the surface protein gp120 is a ligand for CD209/DC-SIGN and CLEC4M/DC-SIGNR, which are respectively found on dendritic cells (DCs), and on endothelial cells of liver sinusoids and lymph node sinuses. These interactions allow capture of viral particles at mucosal surfaces by these cells and subsequent transmission to permissive cells. DCs are professional antigen presenting cells, critical for host immunity by inducing specific immune responses against a broad variety of pathogens. They act as sentinels in various tissues where they take up antigen, process it, and present it to T-cells following migration to lymphoid organs. SIV subverts the migration properties of dendritic cells to gain access to CD4+ T-cells in lymph nodes. Virus transmission to permissive T-cells occurs either in trans (without DCs infection, through viral capture and transmission), or in cis (following DCs productive infection, through the usual CD4-gp120 interaction), thereby inducing a robust infection. In trans infection, bound virions remain infectious over days and it is proposed that they are not degraded, but protected in non-lysosomal acidic organelles within the DCs close to the cell membrane thus contributing to the viral infectious potential during DCs' migration from the periphery to the lymphoid tissues. On arrival at lymphoid tissues, intact virions recycle back to DCs' cell surface allowing virus transmission to CD4+ T-cells. Virion capture also seems to lead to MHC-II-restricted viral antigen presentation, and probably to the activation of SIV-specific CD4+ cells. The transmembrane protein gp41 (TM) acts as a class I viral fusion protein. Under the current model, the protein has at least 3 conformational states: pre-fusion native state, pre-hairpin intermediate state, and post-fusion hairpin state. During fusion of viral and target intracellular membranes, the coiled coil regions (heptad repeats) assume a trimer-of-hairpins structure, positioning the fusion peptide in close proximity to the C-terminal region of the ectodomain. The formation of this structure appears to drive apposition and subsequent fusion of viral and target cell membranes. Complete fusion occurs in host cell endosomes. The virus undergoes clathrin-dependent internalization long before endosomal fusion, thus minimizing the surface exposure of conserved viral epitopes during fusion and reducing the efficacy of inhibitors targeting these epitopes. Membranes fusion leads to delivery of the nucleocapsid into the cytoplasm. Its function is as follows. The envelope glycoprotein gp160 precursor down-modulates cell surface CD4 antigen by interacting with it in the endoplasmic reticulum and blocking its transport to the cell surface. In terms of biological role, the gp120-gp41 heterodimer allows rapid transcytosis of the virus through CD4 negative cells such as simple epithelial monolayers of the intestinal, rectal and endocervical epithelial barriers. Both gp120 and gp41 specifically recognize glycosphingolipids galactosyl-ceramide (GalCer) or 3' sulfo-galactosyl-ceramide (GalS) present in the lipid rafts structures of epithelial cells. Binding to these alternative receptors allows the rapid transcytosis of the virus through the epithelial cells. This transcytotic vesicle-mediated transport of virions from the apical side to the basolateral side of the epithelial cells does not involve infection of the cells themselves. This Simian immunodeficiency virus (isolate TAN1) (SIV-cpz) protein is Envelope glycoprotein gp160.